We begin with the raw amino-acid sequence, 101 residues long: Putative regulatory protein Csac_2087 (101 aa).

Belongs to the RemA family.

The protein is Putative regulatory protein Csac_2087 of Caldicellulosiruptor saccharolyticus (strain ATCC 43494 / DSM 8903 / Tp8T 6331).